We begin with the raw amino-acid sequence, 214 residues long: MGQSLLSSFGDAQQRVEKSLQALRQGEGVLLVDDEDRENEGDLIYSAEHLTAKQMALMIREGSGIVCLCLTGEKVDELKLPQMVTNNNSRHGTGFTISIEARDGVTTGVSAADRTQTVKAAIAEGAVAEDLCQPGHVFPLRARDNGVLDRRGHTEGTVDLMKLSGLAPAGLLCELTNVDGTMARLPEIVDFARKRDMQVLSIEDIAQYRQGHNL.

Residues 37–38 (RE), Asp42, 150–154 (RRGHT), and Glu174 contribute to the D-ribulose 5-phosphate site. Glu38 contributes to the Mg(2+) binding site. Residue His153 coordinates Mg(2+).

It belongs to the DHBP synthase family. Homodimer. Mg(2+) serves as cofactor. The cofactor is Mn(2+).

It carries out the reaction D-ribulose 5-phosphate = (2S)-2-hydroxy-3-oxobutyl phosphate + formate + H(+). It participates in cofactor biosynthesis; riboflavin biosynthesis; 2-hydroxy-3-oxobutyl phosphate from D-ribulose 5-phosphate: step 1/1. Its function is as follows. Catalyzes the conversion of D-ribulose 5-phosphate to formate and 3,4-dihydroxy-2-butanone 4-phosphate. This Desulfotalea psychrophila (strain LSv54 / DSM 12343) protein is 3,4-dihydroxy-2-butanone 4-phosphate synthase.